Consider the following 193-residue polypeptide: Gas vesicle protein C (193 aa).

5 repeats span residues 19–51 (VAEL…LQAF), 52–84 (YKDL…LLAF), 85–117 (HKEL…LLAF), 118–150 (YQEV…LLAF), and 151–183 (HKEL…LLKF). The interval 19-183 (VAELSLETRE…KEQKESLLKF (165 aa)) is 5 X 33 AA tandem repeats.

Belongs to the gas vesicle GvpC family.

It localises to the gas vesicle. Its function is as follows. Confers stability, involved in shaping gas vesicles (GV), hollow, gas-filled proteinaceous nanostructures. During planktonic growth they allow positioning of the organism at a favorable depth for light or nutrient acquisition. The ratio of GvpA:GvpC is estimated to be 25:1. GvpC strengthens the GV wall, probably by connecting several GvpA proteins in the same and/or adjacent ribs. Removal of GvpC by SDS reduces the critical collapse pressure (CCP) of stored gas vesicles from 0.23 Mpa to 0.08 MPa. Removal of GvpC by urea reduces CCP of freshly isolated GVs from 0.550 MPa to 0.190 MPa; addition of recombinant GvpC restores CCP to 0.508 MPa. As the turgor pressure in this species is usually 0.35 MPa (plus the water column pressure in its growth environment), this protein is essential for GV formation. This is Gas vesicle protein C from Dolichospermum flosaquae (Anabaena flos-aquae).